Here is an 888-residue protein sequence, read N- to C-terminus: Protein sey1 (888 aa).

Residues Met-1–Ala-24 are disordered. The Cytoplasmic segment spans residues Met-1–Gln-771. The GB1/RHD3-type G domain occupies Gly-76–Tyr-315. GTP is bound at residue Gly-86 to Ser-93. Residues Gly-703–Val-723 are disordered. Residues Lys-712–Val-723 show a composition bias toward acidic residues. Positions Asp-724–Asp-745 form a coiled coil. Residues Val-772 to Leu-792 traverse the membrane as a helical segment. The Lumenal portion of the chain corresponds to Arg-793–Pro-795. A helical transmembrane segment spans residues Ile-796–Leu-816. The Cytoplasmic segment spans residues Trp-817–Ile-888.

It belongs to the TRAFAC class dynamin-like GTPase superfamily. GB1/RHD3 GTPase family. RHD3 subfamily.

The protein resides in the endoplasmic reticulum membrane. Functionally, cooperates with the reticulon proteins and tubule-shaping DP1 family proteins to generate and maintain the structure of the tubular endoplasmic reticulum network. Has GTPase activity, which is required for its function in ER organization. This is Protein sey1 (sey1) from Sclerotinia sclerotiorum (strain ATCC 18683 / 1980 / Ss-1) (White mold).